The primary structure comprises 255 residues: F-box/SPRY domain-containing protein 1 (255 aa).

The F-box domain maps to 3 to 51 (DPVAALCNYNVLEVIFSYLELDDLSHCSQVCKSWYHFLNDENSDVWRWH). The 193-residue stretch at 61 to 253 (LKSDLLSSVS…VSMVYLGTPL (193 aa)) folds into the B30.2/SPRY domain.

Belongs to the FBXO45/Fsn family. Component of an E3 ubiquitin ligase complex composed of hiw and Fsn.

The protein localises to the synapse. It participates in protein modification; protein ubiquitination. Required in the presynaptic motoneuron to down-regulate the levels of wnd and restrain synaptic terminal growth at the neuromuscular junction (NMJ). This Drosophila simulans (Fruit fly) protein is F-box/SPRY domain-containing protein 1.